A 379-amino-acid polypeptide reads, in one-letter code: Homoserine O-succinyltransferase (379 aa).

One can recognise an AB hydrolase-1 domain in the interval 51–360 (NAVLICHALS…DSPYGHDAFL (310 aa)). S157 (nucleophile) is an active-site residue. R227 is a substrate binding site. Active-site residues include D323 and H356. Substrate is bound at residue D357.

This sequence belongs to the AB hydrolase superfamily. MetX family. As to quaternary structure, homodimer.

It is found in the cytoplasm. The catalysed reaction is L-homoserine + succinyl-CoA = O-succinyl-L-homoserine + CoA. It participates in amino-acid biosynthesis; L-methionine biosynthesis via de novo pathway; O-succinyl-L-homoserine from L-homoserine: step 1/1. Requires MetW for activity. In terms of biological role, transfers a succinyl group from succinyl-CoA to L-homoserine, forming succinyl-L-homoserine. The sequence is that of Homoserine O-succinyltransferase from Pseudomonas putida (strain ATCC 47054 / DSM 6125 / CFBP 8728 / NCIMB 11950 / KT2440).